The sequence spans 472 residues: 3-isopropylmalate dehydratase large subunit (472 aa).

3 residues coordinate [4Fe-4S] cluster: Cys-351, Cys-412, and Cys-415.

Belongs to the aconitase/IPM isomerase family. LeuC type 1 subfamily. In terms of assembly, heterodimer of LeuC and LeuD. The cofactor is [4Fe-4S] cluster.

It carries out the reaction (2R,3S)-3-isopropylmalate = (2S)-2-isopropylmalate. It functions in the pathway amino-acid biosynthesis; L-leucine biosynthesis; L-leucine from 3-methyl-2-oxobutanoate: step 2/4. Its function is as follows. Catalyzes the isomerization between 2-isopropylmalate and 3-isopropylmalate, via the formation of 2-isopropylmaleate. The chain is 3-isopropylmalate dehydratase large subunit from Marinobacter nauticus (strain ATCC 700491 / DSM 11845 / VT8) (Marinobacter aquaeolei).